Here is a 105-residue protein sequence, read N- to C-terminus: uncharacterized protein (105 aa).

2 disordered regions span residues 29–55 and 72–105; these read HTRVGVTDPDPRVPPLLPGPAGVTDES and EQRGDRRAVRCEPAGEPPLDDVRTPAAPAVRSGR. The segment covering 72–81 has biased composition (basic and acidic residues); it reads EQRGDRRAVR.

This is an uncharacterized protein from Streptomyces coelicolor (strain ATCC BAA-471 / A3(2) / M145).